The primary structure comprises 128 residues: S-adenosylmethionine decarboxylase proenzyme (128 aa).

Ser63 serves as the catalytic Schiff-base intermediate with substrate; via pyruvic acid. The residue at position 63 (Ser63) is a Pyruvic acid (Ser); by autocatalysis. His68 acts as the Proton acceptor; for processing activity in catalysis. Cys83 acts as the Proton donor; for catalytic activity in catalysis.

This sequence belongs to the prokaryotic AdoMetDC family. Type 1 subfamily. Heterotetramer of two alpha and two beta chains arranged as a dimer of alpha/beta heterodimers. It depends on pyruvate as a cofactor. In terms of processing, is synthesized initially as an inactive proenzyme. Formation of the active enzyme involves a self-maturation process in which the active site pyruvoyl group is generated from an internal serine residue via an autocatalytic post-translational modification. Two non-identical subunits are generated from the proenzyme in this reaction, and the pyruvate is formed at the N-terminus of the alpha chain, which is derived from the carboxyl end of the proenzyme. The post-translation cleavage follows an unusual pathway, termed non-hydrolytic serinolysis, in which the side chain hydroxyl group of the serine supplies its oxygen atom to form the C-terminus of the beta chain, while the remainder of the serine residue undergoes an oxidative deamination to produce ammonia and the pyruvoyl group blocking the N-terminus of the alpha chain.

The catalysed reaction is S-adenosyl-L-methionine + H(+) = S-adenosyl 3-(methylsulfanyl)propylamine + CO2. Its pathway is amine and polyamine biosynthesis; S-adenosylmethioninamine biosynthesis; S-adenosylmethioninamine from S-adenosyl-L-methionine: step 1/1. Functionally, catalyzes the decarboxylation of S-adenosylmethionine to S-adenosylmethioninamine (dcAdoMet), the propylamine donor required for the synthesis of the polyamines spermine and spermidine from the diamine putrescine. The chain is S-adenosylmethionine decarboxylase proenzyme from Leptospira borgpetersenii serovar Hardjo-bovis (strain JB197).